The chain runs to 333 residues: Casein kinase II subunit alpha-3 (333 aa).

The 286-residue stretch at 34–319 (YEVVRKVGRG…AREAMDHPYF (286 aa)) folds into the Protein kinase domain. ATP-binding positions include 40–48 (VGRGKYSEV) and K63. D151 functions as the Proton acceptor in the catalytic mechanism.

This sequence belongs to the protein kinase superfamily. Ser/Thr protein kinase family. CK2 subfamily. In terms of assembly, heterotetramer of two catalytic alpha subunits and two regulatory beta subunits.

It localises to the nucleus. It is found in the nucleolus. The protein resides in the cytoplasm. The catalysed reaction is L-seryl-[protein] + ATP = O-phospho-L-seryl-[protein] + ADP + H(+). The enzyme catalyses L-threonyl-[protein] + ATP = O-phospho-L-threonyl-[protein] + ADP + H(+). Casein kinases are operationally defined by their preferential utilization of acidic proteins such as caseins as substrates. The alpha chain contains the catalytic site. The tetrameric holoenzyme CK2 is composed of two alpha and two beta subunits. Acts as a circadian clock component that maintains the correct period length through phosphorylation of CCA1. This is Casein kinase II subunit alpha-3 from Arabidopsis thaliana (Mouse-ear cress).